A 162-amino-acid polypeptide reads, in one-letter code: MERLIEKLLYSSRWIMAPIYLGLSLLLLALGIKFFQEIFHLLPNIFTIKEVDLILVALSLIDVSLVGGLIVMVMFSGYENFVSKLDVDESEDKLGWLGKLDTSSLKNKVSASIVAISSIHLLKVFMNTENIESDKIKWYLLLHITFVVSAFAMGYLDKITKK.

Transmembrane regions (helical) follow at residues Ile-15–Phe-35, Leu-53–Val-73, Val-109–Met-126, and Ile-136–Leu-156.

The protein belongs to the UPF0114 family.

It is found in the cell membrane. The protein is UPF0114 protein VCM66_0196 of Vibrio cholerae serotype O1 (strain M66-2).